The sequence spans 172 residues: NADH-quinone oxidoreductase subunit B (172 aa).

[4Fe-4S] cluster-binding residues include Cys-46, Cys-47, Cys-111, and Cys-141.

The protein belongs to the complex I 20 kDa subunit family. In terms of assembly, NDH-1 is composed of 14 different subunits. Subunits NuoB, C, D, E, F, and G constitute the peripheral sector of the complex. The cofactor is [4Fe-4S] cluster.

It is found in the cell membrane. The catalysed reaction is a quinone + NADH + 5 H(+)(in) = a quinol + NAD(+) + 4 H(+)(out). Its function is as follows. NDH-1 shuttles electrons from NADH, via FMN and iron-sulfur (Fe-S) centers, to quinones in the respiratory chain. The immediate electron acceptor for the enzyme in this species is believed to be a menaquinone. Couples the redox reaction to proton translocation (for every two electrons transferred, four hydrogen ions are translocated across the cytoplasmic membrane), and thus conserves the redox energy in a proton gradient. This is NADH-quinone oxidoreductase subunit B from Bacillus cytotoxicus (strain DSM 22905 / CIP 110041 / 391-98 / NVH 391-98).